The following is a 102-amino-acid chain: Nucleoid-associated protein WIGBR5260 (102 aa).

This sequence belongs to the YbaB/EbfC family. Homodimer.

It localises to the cytoplasm. The protein localises to the nucleoid. Binds to DNA and alters its conformation. May be involved in regulation of gene expression, nucleoid organization and DNA protection. The sequence is that of Nucleoid-associated protein WIGBR5260 from Wigglesworthia glossinidia brevipalpis.